The following is a 256-amino-acid chain: Ribonuclease 3-like protein 1 (256 aa).

In terms of domain architecture, RNase III spans 22-168 (AEVERALGGY…IVGAVYLDSK (147 aa)). Glu65, Asp154, and Glu157 together coordinate Mg(2+).

Mg(2+) is required as a cofactor. Mn(2+) serves as cofactor.

Its function is as follows. Cleaves double-stranded RNA (dsRNA). In Oryza sativa subsp. japonica (Rice), this protein is Ribonuclease 3-like protein 1.